The following is a 1147-amino-acid chain: MDEELAFGQTVEVVDPDVRAHVYSLVTALGGFNGEDADKYVLGDDALACLRDIRRWLKLYDEKYNRMDVARCLGESNLVNGDLLPILSAWWHGNQGSRYMSRIALACKVELLVPLTWPLEVHAEMPANHLRHIPYLQHVQVLYKRGLLSRGHTPLLRAIIRIALPSMAVSRSERTTRDEGILKLMLYLLRNIAIISTNARLAAEGDEEETSRSATINAFQEQDAFALLLTMCSNVGDDFTMQDMVLLEIVFHLIKGVDVEKLFMSDAQRSAKRTDELSELLSKETSLRREYAKNAPTRHGRFGTMIWVKRDDAKMSTVSGQDVLKDSQATLYKMDQSKKWNKPKQRQKQELSVVNNDFDTPVHLNPIASKNLRMFVEEFLDSGFNPLFTHVRKAIEREADRVMDINSRQYFYAVAWFLEAERTRRVRQREKHSQSEKAAKEFEPDSFSLIASVLNQETFVFLNRSMQYSFDQKDWADLNAEMRCFTQILLTVQEMATSPLEEDQEIAENIQNRIFYEETTHDRILAIVRGYKDQGYGYLDACTELSHVFLRMLERYSKENTDMQIRSRRRAKRKKQLEQKGDENNGEEQDSEEEEMLEAERVSKERKFDFRRFSAKFCNQKCVDTFVSFARFYRELNSDQLKRLHRYFYRIAFKEEMSVLLFRVDIINLFYRMIKGPGGMDSTKPIFKEWEEFVRQLIRRMVKKIDQRPALITEMLFSKINSTMYYLEFGHEKQTISVTRRPPAELVVNPNDAETTEDKIKIVIGALVKDGKNRLVSWLSGVLDSAADEREAFEIQEAAEREENTRASRAPNPMIPVEPSDDDCKNEMFSNAKLRLLMALVKFERLGVEDIPGASWVVPAHLSSADIRDIKSTVDKCLADPFQGTFDREPQAMLQRKFQRENRGSFEPTQEVSFGNDSEGEDTPEFLFPPNPRSKSNALEELKKKRKKCKNDDGEKEPLDEQTIEERRRAREENARSRQAKIKSDLYVHASDEESDDEADEEFFRLEEKRRKEQSERIRQALLLGKVEELANKAGKKTQRKRPSDPQIAGDSESQNKRLRQDIPEDDDDLIMGGSEPDSPGLQTGDHDSDDDLRFEDDLAFRRNRESSAASDRNGPPGEAKEDEDTPVAASGRRRMRAGFVIDSDSE.

Disordered stretches follow at residues 564–598 (QIRSRRRAKRKKQLEQKGDENNGEEQDSEEEEMLE), 799–823 (AEREENTRASRAPNPMIPVEPSDDD), 898–1002 (FQRE…ADEE), and 1027–1147 (VEEL…SDSE). Over residues 566–575 (RSRRRAKRKK) the composition is skewed to basic residues. A compositionally biased stretch (acidic residues) spans 584 to 597 (NNGEEQDSEEEEML). Positions 907–916 (EPTQEVSFGN) are enriched in polar residues. 3 stretches are compositionally biased toward basic and acidic residues: residues 950–992 (KNDD…HASD), 1054–1063 (SQNKRLRQDI), and 1096–1106 (EDDLAFRRNRE).

The protein belongs to the timeless family. As to quaternary structure, component of the fork protection complex (FPC) consisting of tof1 and csm3.

The protein resides in the nucleus. In terms of biological role, forms a fork protection complex (FPC) with csm3 and which is required for chromosome segregation during meiosis and DNA damage repair. FPC coordinates leading and lagging strand synthesis and moves with the replication fork. FPC stabilizes replication forks in a configuration that is recognized by replication checkpoint sensors. This is Topoisomerase 1-associated factor 1 (tof1) from Aspergillus terreus (strain NIH 2624 / FGSC A1156).